Reading from the N-terminus, the 132-residue chain is MRHGNGLRKLNRTSSHRLAMLRNMCNSLIQHEAIKTTVPKAKELRRVVERLLTLGKTPTLANKRLAFDRLRDRDNVVKLFGVLGPRYAARPGGYTRILKMGFRVGDNAPMAFVELVDRPDPSAAVEVTEDKA.

The protein belongs to the bacterial ribosomal protein bL17 family. As to quaternary structure, part of the 50S ribosomal subunit. Contacts protein L32.

The polypeptide is Large ribosomal subunit protein bL17 (Leptothrix cholodnii (strain ATCC 51168 / LMG 8142 / SP-6) (Leptothrix discophora (strain SP-6))).